Here is a 156-residue protein sequence, read N- to C-terminus: MGVIKAVAVINGNNNVKGSLQFIQDSTGVTHVKGRITGLTPGLHGFHIHALGDTTNGCNSTGPHFNPLKKDHGAPFDTERHAGDLGNVVAGADGVAEVSVRDTQIPLSGQHSILGRAVVVHADQDDLGRTGHELSKTTGNAGARVRCGIIGLQASV.

The Cu cation site is built by His47, His49, and His64. A disulfide bridge links Cys58 with Cys147. Residues His64, His72, His81, and Asp84 each contribute to the Zn(2+) site. His121 lines the Cu cation pocket.

It belongs to the Cu-Zn superoxide dismutase family. As to quaternary structure, homodimer. The cofactor is Cu cation. Zn(2+) is required as a cofactor.

It localises to the cytoplasm. The enzyme catalyses 2 superoxide + 2 H(+) = H2O2 + O2. Functionally, destroys radicals which are normally produced within the cells and which are toxic to biological systems. This is Superoxide dismutase [Cu-Zn] 2 (SODCC.2) from Mesembryanthemum crystallinum (Common ice plant).